The primary structure comprises 218 residues: Cytochrome b6 (218 aa).

The chain crosses the membrane as a helical span at residues 35–55 (IFYCLGGITLVCFLIQFATGF). C38 contributes to the heme c binding site. Residues H89 and H103 each contribute to the heme b site. 3 consecutive transmembrane segments (helical) span residues 93–113 (ASMM…TGGF), 119–139 (LTWV…VTGY), and 189–209 (LHTF…FLMI). Heme b is bound by residues H190 and H205.

It belongs to the cytochrome b family. PetB subfamily. In terms of assembly, the 4 large subunits of the cytochrome b6-f complex are cytochrome b6, subunit IV (17 kDa polypeptide, PetD), cytochrome f and the Rieske protein, while the 4 small subunits are PetG, PetL, PetM and PetN. The complex functions as a dimer. Requires heme b as cofactor. It depends on heme c as a cofactor.

The protein localises to the cellular thylakoid membrane. In terms of biological role, component of the cytochrome b6-f complex, which mediates electron transfer between photosystem II (PSII) and photosystem I (PSI), cyclic electron flow around PSI, and state transitions. The sequence is that of Cytochrome b6 from Prochlorococcus marinus (strain MIT 9215).